The following is a 315-amino-acid chain: tRNA dimethylallyltransferase (315 aa).

18–25 contributes to the ATP binding site; that stretch reads GPTASGKT. Position 20–25 (20–25) interacts with substrate; it reads TASGKT. Interaction with substrate tRNA regions lie at residues 43-46, 167-171, and 248-253; these read DSAL, QRLSR, and RCVGYR.

Belongs to the IPP transferase family. As to quaternary structure, monomer. Requires Mg(2+) as cofactor.

The catalysed reaction is adenosine(37) in tRNA + dimethylallyl diphosphate = N(6)-dimethylallyladenosine(37) in tRNA + diphosphate. Catalyzes the transfer of a dimethylallyl group onto the adenine at position 37 in tRNAs that read codons beginning with uridine, leading to the formation of N6-(dimethylallyl)adenosine (i(6)A). In Pseudoalteromonas atlantica (strain T6c / ATCC BAA-1087), this protein is tRNA dimethylallyltransferase.